Here is a 147-residue protein sequence, read N- to C-terminus: Large ribosomal subunit protein uL23A (147 aa).

Residues 1–10 are compositionally biased toward low complexity; the sequence is MAPSAPAKTA. The interval 1-29 is disordered; it reads MAPSAPAKTAKALDAKKKVVKGKRTTHRR. Over residues 18–29 the composition is skewed to basic residues; the sequence is KVVKGKRTTHRR.

Belongs to the universal ribosomal protein uL23 family.

In terms of biological role, this protein binds to a specific region on the 26S rRNA. This is Large ribosomal subunit protein uL23A from Caenorhabditis elegans.